The primary structure comprises 92 residues: RNA-binding protein Hfq (92 aa).

The Sm domain maps to 9-68; it reads DPFLNALRRERVPVSIYLVNGIKLQGQVESFDQFVILLKNTVSQMVYKHAISTVVPSRPF. Residues 73–82 show a composition bias toward polar residues; that stretch reads HQATNAQAGY. Residues 73-92 form a disordered region; it reads HQATNAQAGYNAQHDDGDEK.

It belongs to the Hfq family. Homohexamer.

RNA chaperone that binds small regulatory RNA (sRNAs) and mRNAs to facilitate mRNA translational regulation in response to envelope stress, environmental stress and changes in metabolite concentrations. Also binds with high specificity to tRNAs. The sequence is that of RNA-binding protein Hfq from Shewanella pealeana (strain ATCC 700345 / ANG-SQ1).